A 462-amino-acid chain; its full sequence is Protoheme IX farnesyltransferase, mitochondrial (462 aa).

The N-terminal 30 residues, 1–30, are a transit peptide targeting the mitochondrion; sequence MSYFPRTYAHLMRNVLAHNKGNIYLQIGTQ. Transmembrane regions (helical) follow at residues 158–178, 234–254, 274–294, 298–318, 352–372, 373–393, and 425–445; these read TILV…PASV, LIGT…VAIL, IINT…GWAA, LSHP…FPHF, YSIL…TDWY, YQID…KFYW, and FMAS…HKKG.

The protein belongs to the UbiA prenyltransferase family. As to quaternary structure, forms ~370 kDa homooligomeric complexes.

The protein resides in the mitochondrion. It is found in the mitochondrion membrane. It carries out the reaction heme b + (2E,6E)-farnesyl diphosphate + H2O = Fe(II)-heme o + diphosphate. The protein operates within porphyrin-containing compound metabolism; heme O biosynthesis; heme O from protoheme: step 1/1. With respect to regulation, positively regulated by the hydroxylated intermediate (heme I) formed at the subsequent step, or by HAS/COX15 itself. Functionally, catalyzes the first reaction in the biosynthesis of heme A, a prosthetic group of mitochondrial cytochrome c oxidase (CcO). Heme A is synthesized from heme B by two sequential enzymatic reactions catalyzed by heme O synthase (HOS/COX10) and heme A synthase (HAS/COX15). HOS converts heme B (protoheme IX) to heme O by substitution of the vinyl group on carbon 2 of heme B porphyrin ring with a hydroxyethyl farnesyl side group. The sequence is that of Protoheme IX farnesyltransferase, mitochondrial (COX10) from Saccharomyces cerevisiae (strain ATCC 204508 / S288c) (Baker's yeast).